Here is a 393-residue protein sequence, read N- to C-terminus: Cytochrome b (393 aa).

4 helical membrane passes run 33–53, 77–98, 113–133, and 178–198; these read FGSL…FLAM, WFLR…YLHM, WNIG…GYVL, and FFAI…LHLL. Residues His83 and His97 each coordinate heme b. The heme b site is built by His182 and His196. Residue His201 participates in a ubiquinone binding. The next 4 helical transmembrane spans lie at 226-246, 288-308, 320-340, and 347-367; these read YKDV…ALFA, LGGV…PFIH, LSQL…WIGG, and FIII…ILMP.

The protein belongs to the cytochrome b family. The cytochrome bc1 complex contains 3 respiratory subunits (MT-CYB, CYC1 and UQCRFS1), 2 core proteins (UQCRC1 and UQCRC2) and probably 6 low-molecular weight proteins. Heme b serves as cofactor.

It is found in the mitochondrion inner membrane. Component of the ubiquinol-cytochrome c reductase complex (complex III or cytochrome b-c1 complex) that is part of the mitochondrial respiratory chain. The b-c1 complex mediates electron transfer from ubiquinol to cytochrome c. Contributes to the generation of a proton gradient across the mitochondrial membrane that is then used for ATP synthesis. This chain is Cytochrome b (mt-cyb), found in Synbranchus marmoratus (Marbled swamp eel).